The following is a 398-amino-acid chain: Serpin-Z1C (398 aa).

Residues 343–367 (GTEAAASTAIKMALLQARPPSVMDF) are RCL.

Belongs to the serpin family.

Functionally, inhibits chymotrypsin and cathepsin G in vitro. This Triticum aestivum (Wheat) protein is Serpin-Z1C.